Reading from the N-terminus, the 493-residue chain is Lysostaphin (493 aa).

An N-terminal signal peptide occupies residues 1–23 (MKKTKNNYYTRPLAIGLSTFALA). The propeptide occupies 24 to 247 (SIVYGGIQNE…ALVQNRTALR (224 aa)). 14 tandem repeats follow at residues 49–61 (AEVETSKAPVENT), 62–74 (AEVETSKAPVENT), 75–87 (AEVETSKAPVENT), 88–100 (AEVETSKAPVENT), 101–113 (AEVETSKAPVENT), 114–126 (AEVETSKAPVENT), 127–139 (AEVETSKAPVENT), 140–152 (AEVETSKAPVENT), 153–165 (AEVETSKAPVENT), 166–178 (AEVETSKAPVENT), 179–191 (AEVETSKAPVENT), 192–204 (AEVETSKAPVENT), 205–217 (AEVETSKAPVENT), and 218–230 (AEVETSKAPVENT). The interval 49 to 243 (AEVETSKAPV…ETSKALVQNR (195 aa)) is 15 X 13 AA approximate tandem repeats of A-E-V-E-T-S-K-A-P-V-E-N-T. The disordered stretch occupies residues 52–232 (ETSKAPVENT…SKAPVENTAE (181 aa)). The 15; approximate repeat unit spans residues 231-243 (AEVETSKALVQNR). 2 residues coordinate Zn(2+): His279 and Asp283. The active site involves His360. His362 lines the Zn(2+) pocket. One can recognise an SH3b domain in the interval 413 to 481 (SESASFTPNT…YLPVRTWNKS (69 aa)).

This sequence belongs to the peptidase M23B family. As to quaternary structure, monomer. Requires Zn(2+) as cofactor.

The protein localises to the secreted. The enzyme catalyses Hydrolysis of the -Gly-|-Gly- bond in the pentaglycine inter-peptide link joining staphylococcal cell wall peptidoglycans.. Lyses staphylococcal cells by hydrolyzing the polyglycine interpeptide bridges of the peptidoglycan. In Staphylococcus simulans, this protein is Lysostaphin (lss).